Here is a 332-residue protein sequence, read N- to C-terminus: UPF0194 membrane protein YbhG (332 aa).

The N-terminal stretch at 1–16 (MMKKPVVIGLAVVVLA) is a signal peptide. Positions 141-210 (RTISANDLEN…NLQDSTLIAP (70 aa)) form a coiled coil.

It belongs to the UPF0194 family.

The protein resides in the periplasm. This Shigella flexneri protein is UPF0194 membrane protein YbhG (ybhG).